The sequence spans 260 residues: Snake venom serine protease 2 (260 aa).

A signal peptide spans 1–18; it reads MVLIRVLANLLILQLFYA. Residues 19–24 constitute a propeptide that is removed on maturation; the sequence is QKSSEL. In terms of domain architecture, Peptidase S1 spans 25–251; the sequence is IIGGDECNIN…HLDWIKSIIA (227 aa). Cystine bridges form between cysteine 31–cysteine 165, cysteine 52–cysteine 68, cysteine 100–cysteine 258, cysteine 144–cysteine 212, cysteine 176–cysteine 191, and cysteine 202–cysteine 227. Asparagine 123 and asparagine 124 each carry an N-linked (GlcNAc...) asparagine glycan.

This sequence belongs to the peptidase S1 family. Snake venom subfamily. Monomer. In terms of tissue distribution, expressed by the venom gland.

Its subcellular location is the secreted. Functionally, snake venom serine protease that may act in the hemostasis system of the prey. The protein is Snake venom serine protease 2 (TLF2) of Protobothrops flavoviridis (Habu).